The sequence spans 95 residues: Large ribosomal subunit protein bL27 (95 aa).

Residues 1–25 form a disordered region; the sequence is MAHKKGTGSTRNGRDSNAQRLGVKR. A compositionally biased stretch (polar residues) spans 7 to 19; the sequence is TGSTRNGRDSNAQ.

This sequence belongs to the bacterial ribosomal protein bL27 family.

This Gloeobacter violaceus (strain ATCC 29082 / PCC 7421) protein is Large ribosomal subunit protein bL27.